A 107-amino-acid polypeptide reads, in one-letter code: Nucleoid-associated protein Pnec_0645 (107 aa).

Belongs to the YbaB/EbfC family. Homodimer.

Its subcellular location is the cytoplasm. The protein localises to the nucleoid. Functionally, binds to DNA and alters its conformation. May be involved in regulation of gene expression, nucleoid organization and DNA protection. In Polynucleobacter necessarius subsp. necessarius (strain STIR1), this protein is Nucleoid-associated protein Pnec_0645.